The chain runs to 44 residues: Small, acid-soluble spore protein N (44 aa).

The interval 1-44 (MGNPKKNSKDFVPNHIGTQSKKAGGNKGKQMQDTTGKQPIVDNG) is disordered.

The protein belongs to the SspN family.

The protein localises to the spore core. The polypeptide is Small, acid-soluble spore protein N (Bacillus cytotoxicus (strain DSM 22905 / CIP 110041 / 391-98 / NVH 391-98)).